Here is a 198-residue protein sequence, read N- to C-terminus: Small ribosomal subunit protein uS4c (198 aa).

Residues 17–40 (TLPGLTSKRPKNRKDSMNRSSSRK) are disordered. The region spanning 88-154 (MRLDKSFSIG…IKKNIDLFQR (67 aa)) is the S4 RNA-binding domain.

This sequence belongs to the universal ribosomal protein uS4 family. Part of the 30S ribosomal subunit. Contacts protein S5. The interaction surface between S4 and S5 is involved in control of translational fidelity.

Its subcellular location is the plastid. It localises to the chloroplast. One of the primary rRNA binding proteins, it binds directly to 16S rRNA where it nucleates assembly of the body of the 30S subunit. Its function is as follows. With S5 and S12 plays an important role in translational accuracy. The chain is Small ribosomal subunit protein uS4c (rps4) from Pinus thunbergii (Japanese black pine).